Consider the following 720-residue polypeptide: Transcriptional regulator EFH1 (720 aa).

Composition is skewed to polar residues over residues 1–15 (MNGI…NFYN) and 22–35 (PSSS…SSQD). 4 disordered regions span residues 1 to 111 (MNGI…SSST), 181 to 223 (SFQM…HQSQ), 245 to 336 (QKEF…TIAT), and 365 to 437 (YQRQ…PQPD). Low complexity predominate over residues 71–105 (QQNQSESQQSRQSHHLQQQQQQQQQQQQNQHNQQN). Polar residues predominate over residues 181–200 (SFQMGSVSTPDTQNSSIRSK). Low complexity predominate over residues 201–223 (QQQQHSYQQQQPQQLSQSQHQSQ). The segment covering 254–266 (GDQTLVPQTNSKL) has biased composition (polar residues). The segment covering 267–304 (QQQISETSYSQQQQQQQSPPTPQKQQQQQHYQHQTTQP) has biased composition (low complexity). Polar residues predominate over residues 313 to 336 (YSQTGGPSSSPVAGNISIPTTIAT). Residues 366-399 (QRQQQQQQQHQQPQSQQMSQISQLSQQIPPQGSS) show a composition bias toward low complexity. Residues 400 to 413 (KNISINSTPTKSRA) are compositionally biased toward polar residues. A compositionally biased stretch (low complexity) spans 414-433 (SSITTRSGRQSRSTSISSFI). The HTH APSES-type domain maps to 446–552 (KVATTRWDDE…KNIKQYFLTK (107 aa)). Residues 480–501 (GTKLLNVIGMTRGKRDGILKTE) constitute a DNA-binding region (H-T-H motif). Residues 569–582 (GMTRQREEVRREGR) show a composition bias toward basic and acidic residues. Positions 569-662 (GMTRQREEVR…KNSESKLLET (94 aa)) are disordered. Over residues 613–644 (VPGDDEEEEDDDDDDDDDEEEGEQDDEEEEDG) the composition is skewed to acidic residues. The span at 645 to 654 (SSTSMSSSKN) shows a compositional bias: low complexity.

Belongs to the EFG1/PHD1/stuA family.

It is found in the nucleus. Its function is as follows. Transcription factor that regulates filamentous growth through repression of EFG1. Regulates the level of colonizing fungi, favoring commensalism as opposed to candidiasis. The polypeptide is Transcriptional regulator EFH1 (EFH1) (Candida albicans (strain SC5314 / ATCC MYA-2876) (Yeast)).